Consider the following 519-residue polypeptide: Steroid 17-alpha-hydroxylase/17,20 lyase (519 aa).

Cys-455 provides a ligand contact to heme.

Belongs to the cytochrome P450 family. It depends on heme as a cofactor.

It is found in the membrane. It carries out the reaction a C21-steroid + reduced [NADPH--hemoprotein reductase] + O2 = a 17alpha-hydroxy-C21-steroid + oxidized [NADPH--hemoprotein reductase] + H2O + H(+). The catalysed reaction is 17alpha-hydroxyprogesterone + reduced [NADPH--hemoprotein reductase] + O2 = androst-4-ene-3,17-dione + acetate + oxidized [NADPH--hemoprotein reductase] + H2O + 2 H(+). It catalyses the reaction 17alpha-hydroxypregnenolone + reduced [NADPH--hemoprotein reductase] + O2 = 3beta-hydroxyandrost-5-en-17-one + acetate + oxidized [NADPH--hemoprotein reductase] + H2O + 2 H(+). The protein operates within lipid metabolism; steroid biosynthesis. In terms of biological role, conversion of pregnenolone and progesterone to their 17-alpha-hydroxylated products and subsequently to dehydroepiandrosterone (DHEA) and androstenedione. Catalyzes both the 17-alpha-hydroxylation and the 17,20-lyase reaction. The polypeptide is Steroid 17-alpha-hydroxylase/17,20 lyase (CYP17A1) (Rana dybowskii (Dybovsky's frog)).